The sequence spans 547 residues: 2-succinyl-5-enolpyruvyl-6-hydroxy-3-cyclohexene-1-carboxylate synthase (547 aa).

The protein belongs to the TPP enzyme family. MenD subfamily. Homodimer. Mg(2+) serves as cofactor. It depends on Mn(2+) as a cofactor. Requires thiamine diphosphate as cofactor.

The enzyme catalyses isochorismate + 2-oxoglutarate + H(+) = 5-enolpyruvoyl-6-hydroxy-2-succinyl-cyclohex-3-ene-1-carboxylate + CO2. It functions in the pathway quinol/quinone metabolism; 1,4-dihydroxy-2-naphthoate biosynthesis; 1,4-dihydroxy-2-naphthoate from chorismate: step 2/7. The protein operates within quinol/quinone metabolism; menaquinone biosynthesis. In terms of biological role, catalyzes the thiamine diphosphate-dependent decarboxylation of 2-oxoglutarate and the subsequent addition of the resulting succinic semialdehyde-thiamine pyrophosphate anion to isochorismate to yield 2-succinyl-5-enolpyruvyl-6-hydroxy-3-cyclohexene-1-carboxylate (SEPHCHC). In Mycobacterium sp. (strain KMS), this protein is 2-succinyl-5-enolpyruvyl-6-hydroxy-3-cyclohexene-1-carboxylate synthase.